The primary structure comprises 154 residues: Large-conductance mechanosensitive channel (154 aa).

2 helical membrane-spanning segments follow: residues 14-34 and 86-106; these read VVDL…VNSL and VFIN…FFVV.

This sequence belongs to the MscL family. As to quaternary structure, homopentamer.

It is found in the cell membrane. Channel that opens in response to stretch forces in the membrane lipid bilayer. May participate in the regulation of osmotic pressure changes within the cell. This Dehalococcoides mccartyi (strain CBDB1) protein is Large-conductance mechanosensitive channel.